Reading from the N-terminus, the 627-residue chain is 1-deoxy-D-xylulose-5-phosphate synthase (627 aa).

Thiamine diphosphate is bound by residues H76 and 117–119 (SHA). D148 contacts Mg(2+). Thiamine diphosphate-binding positions include 149 to 150 (GA), N178, F288, and E370. N178 contributes to the Mg(2+) binding site.

This sequence belongs to the transketolase family. DXPS subfamily. As to quaternary structure, homodimer. The cofactor is Mg(2+). Requires thiamine diphosphate as cofactor.

The enzyme catalyses D-glyceraldehyde 3-phosphate + pyruvate + H(+) = 1-deoxy-D-xylulose 5-phosphate + CO2. Its pathway is metabolic intermediate biosynthesis; 1-deoxy-D-xylulose 5-phosphate biosynthesis; 1-deoxy-D-xylulose 5-phosphate from D-glyceraldehyde 3-phosphate and pyruvate: step 1/1. Functionally, catalyzes the acyloin condensation reaction between C atoms 2 and 3 of pyruvate and glyceraldehyde 3-phosphate to yield 1-deoxy-D-xylulose-5-phosphate (DXP). This is 1-deoxy-D-xylulose-5-phosphate synthase from Cutibacterium acnes (strain DSM 16379 / KPA171202) (Propionibacterium acnes).